Consider the following 513-residue polypeptide: ATP synthase subunit alpha (513 aa).

Residue 169–176 coordinates ATP; that stretch reads GDRQTGKT.

Belongs to the ATPase alpha/beta chains family. F-type ATPases have 2 components, CF(1) - the catalytic core - and CF(0) - the membrane proton channel. CF(1) has five subunits: alpha(3), beta(3), gamma(1), delta(1), epsilon(1). CF(0) has three main subunits: a(1), b(2) and c(9-12). The alpha and beta chains form an alternating ring which encloses part of the gamma chain. CF(1) is attached to CF(0) by a central stalk formed by the gamma and epsilon chains, while a peripheral stalk is formed by the delta and b chains.

Its subcellular location is the cell inner membrane. The catalysed reaction is ATP + H2O + 4 H(+)(in) = ADP + phosphate + 5 H(+)(out). Functionally, produces ATP from ADP in the presence of a proton gradient across the membrane. The alpha chain is a regulatory subunit. The polypeptide is ATP synthase subunit alpha (Haemophilus ducreyi (strain 35000HP / ATCC 700724)).